Here is a 360-residue protein sequence, read N- to C-terminus: D-alanine--D-alanine ligase (360 aa).

The ATP-grasp domain maps to 134-343 (KILAQRVGVP…YTELITRLIQ (210 aa)). Position 169 to 224 (169 to 224 (AEKLGHDMFVKPSNQGSSVGVNHVTNAEEYAAALEEAFKYDDKVLVEETVPGTEVE)) interacts with ATP. The Mg(2+) site is built by aspartate 297, glutamate 310, and asparagine 312.

This sequence belongs to the D-alanine--D-alanine ligase family. Mg(2+) serves as cofactor. Requires Mn(2+) as cofactor.

It localises to the cytoplasm. It catalyses the reaction 2 D-alanine + ATP = D-alanyl-D-alanine + ADP + phosphate + H(+). Its pathway is cell wall biogenesis; peptidoglycan biosynthesis. Functionally, cell wall formation. This is D-alanine--D-alanine ligase from Lactobacillus acidophilus (strain ATCC 700396 / NCK56 / N2 / NCFM).